We begin with the raw amino-acid sequence, 426 residues long: Histidinol dehydrogenase (426 aa).

Positions 123, 185, and 208 each coordinate NAD(+). The substrate site is built by Ser231, Gln253, and His256. Zn(2+) contacts are provided by Gln253 and His256. Active-site proton acceptor residues include Glu321 and His322. Residues His322, Asp355, Glu409, and His414 each contribute to the substrate site. Asp355 is a Zn(2+) binding site. His414 is a binding site for Zn(2+).

This sequence belongs to the histidinol dehydrogenase family. Zn(2+) serves as cofactor.

It catalyses the reaction L-histidinol + 2 NAD(+) + H2O = L-histidine + 2 NADH + 3 H(+). Its pathway is amino-acid biosynthesis; L-histidine biosynthesis; L-histidine from 5-phospho-alpha-D-ribose 1-diphosphate: step 9/9. Functionally, catalyzes the sequential NAD-dependent oxidations of L-histidinol to L-histidinaldehyde and then to L-histidine. This Bacillus licheniformis (strain ATCC 14580 / DSM 13 / JCM 2505 / CCUG 7422 / NBRC 12200 / NCIMB 9375 / NCTC 10341 / NRRL NRS-1264 / Gibson 46) protein is Histidinol dehydrogenase.